The chain runs to 373 residues: Enoyl-[acyl-carrier-protein] reductase, mitochondrial (373 aa).

The N-terminal 53 residues, 1 to 53, are a transit peptide targeting the mitochondrion; the sequence is MLVSRRLTGARARAPLLASLLEAWCRQGRTTSSYSAFSEPSHVRALVYGNHGD. At Lys61 the chain carries N6-acetyllysine; alternate. Lys61 carries the post-translational modification N6-succinyllysine; alternate. Tyr94 functions as the Proton donor in the catalytic mechanism. NADP(+)-binding positions include Asn167, 193 to 196, and 216 to 218; these read NSGV and RDR. N6-acetyllysine; alternate is present on residues Lys252 and Lys267. N6-succinyllysine; alternate is present on residues Lys252 and Lys267. NADP(+) contacts are provided by residues 285-288 and 310-312; these read YGGM and FWL. Lys316 is subject to N6-succinyllysine. Lys368 contacts NADP(+).

It belongs to the zinc-containing alcohol dehydrogenase family. Quinone oxidoreductase subfamily. As to quaternary structure, homodimer. In terms of assembly, interacts with PPARA in the nucleus and increases its activity.

Its subcellular location is the mitochondrion. The protein localises to the cytoplasm. It is found in the nucleus. It catalyses the reaction a 2,3-saturated acyl-[ACP] + NADP(+) = a (2E)-enoyl-[ACP] + NADPH + H(+). It carries out the reaction (2E)-butenoyl-[ACP] + NADPH + H(+) = butanoyl-[ACP] + NADP(+). The catalysed reaction is (2E)-hexenoyl-[ACP] + NADPH + H(+) = hexanoyl-[ACP] + NADP(+). The enzyme catalyses (2E)-octenoyl-[ACP] + NADPH + H(+) = octanoyl-[ACP] + NADP(+). It catalyses the reaction (2E)-decenoyl-[ACP] + NADPH + H(+) = decanoyl-[ACP] + NADP(+). It carries out the reaction (2E)-dodecenoyl-[ACP] + NADPH + H(+) = dodecanoyl-[ACP] + NADP(+). The catalysed reaction is (2E)-tetradecenoyl-[ACP] + NADPH + H(+) = tetradecanoyl-[ACP] + NADP(+). The enzyme catalyses (2E)-hexadecenoyl-[ACP] + NADPH + H(+) = hexadecanoyl-[ACP] + NADP(+). Its function is as follows. Catalyzes the NADPH-dependent reduction of trans-2-enoyl thioesters in mitochondrial fatty acid synthesis (fatty acid synthesis type II). Fatty acid chain elongation in mitochondria uses acyl carrier protein (ACP) as an acyl group carrier, but the enzyme accepts both ACP and CoA thioesters as substrates in vitro. Displays a preference for medium-chain over short- and long-chain substrates. May provide the octanoyl chain used for lipoic acid biosynthesis, regulating protein lipoylation and mitochondrial respiratory activity particularly in Purkinje cells. Involved in iron homeostasis; affecting Fe-S cluster assembly and ceramide metabolism. Required for proper morphology and bioenergetic functions of mitochondria. Required for maintenance of neurons. The chain is Enoyl-[acyl-carrier-protein] reductase, mitochondrial (Mecr) from Rattus norvegicus (Rat).